The sequence spans 116 residues: Small ribosomal subunit protein uS10m (116 aa).

It belongs to the universal ribosomal protein uS10 family.

Its subcellular location is the mitochondrion. The polypeptide is Small ribosomal subunit protein uS10m (RPS10) (Reclinomonas americana).